Here is a 287-residue protein sequence, read N- to C-terminus: MLGIRKNIRISVNFLQRRTITVKQKLGKNRPLPGWDPNSEYFRPGPTMLNRLQEHLHDTILPDVLAASYRHDIDTALSTDEHTQKDRLPRWIGDNPYYKNRPPQKMRGNKPLLPVKESVNPKNLPSISKVVVSTMHKEALVDKTQLLSTMMAFRSITGLQPEIVYARKDVSPWKLRSGVPVGVKVTLTGESMYTFLSILSELVLPQLHDFKGLSPTSGDQTGNISFGLPSEVMPLFPQIEAVYEMYPHSLPGFNVNITTNSKDTRLARFFVSSLIPFTDGNKEGYVG.

A mitochondrion-targeting transit peptide spans 1-18; it reads MLGIRKNIRISVNFLQRR. Residues 80–89 are compositionally biased toward basic and acidic residues; it reads DEHTQKDRLP. The interval 80–109 is disordered; that stretch reads DEHTQKDRLPRWIGDNPYYKNRPPQKMRGN.

Belongs to the universal ribosomal protein uL5 family. As to quaternary structure, component of the mitochondrial large ribosomal subunit (mt-LSU). Mature yeast 74S mitochondrial ribosomes consist of a small (37S) and a large (54S) subunit. The 37S small subunit contains a 15S ribosomal RNA (15S mt-rRNA) and at least 32 different proteins. The 54S large subunit contains a 21S rRNA (21S mt-rRNA) and at least 45 different proteins. Unlike bacterial L5, uL5m does not bind zinc.

Its subcellular location is the mitochondrion. Functionally, component of the mitochondrial ribosome (mitoribosome), a dedicated translation machinery responsible for the synthesis of mitochondrial genome-encoded proteins, including at least some of the essential transmembrane subunits of the mitochondrial respiratory chain. The mitoribosomes are attached to the mitochondrial inner membrane and translation products are cotranslationally integrated into the membrane. This Schizosaccharomyces pombe (strain 972 / ATCC 24843) (Fission yeast) protein is Large ribosomal subunit protein uL5m (mrpl7).